The sequence spans 232 residues: Ribosomal RNA large subunit methyltransferase E (232 aa).

S-adenosyl-L-methionine is bound by residues Gly64, Trp66, Asp97, Asp113, and Asp138. The active-site Proton acceptor is the Lys178.

Belongs to the class I-like SAM-binding methyltransferase superfamily. RNA methyltransferase RlmE family.

The protein localises to the cytoplasm. It carries out the reaction uridine(2552) in 23S rRNA + S-adenosyl-L-methionine = 2'-O-methyluridine(2552) in 23S rRNA + S-adenosyl-L-homocysteine + H(+). Specifically methylates the uridine in position 2552 of 23S rRNA at the 2'-O position of the ribose in the fully assembled 50S ribosomal subunit. The polypeptide is Ribosomal RNA large subunit methyltransferase E (Leptothrix cholodnii (strain ATCC 51168 / LMG 8142 / SP-6) (Leptothrix discophora (strain SP-6))).